The chain runs to 575 residues: GBF-interacting protein 1-like (575 aa).

Disordered regions lie at residues 66–171 (SKRE…SKSD) and 229–296 (SSSN…VVHS). Polar residues-rich tracts occupy residues 90–102 (FASSNSYQGSGRN), 115–138 (TRGSRTAQPATNKASNITVPNETK), and 161–171 (ISASRCSSKSD). Residues 268–281 (AREETSTVSEDKDY) are compositionally biased toward basic and acidic residues.

It belongs to the GIP1 family. Expressed in roots, leaves, stems and flowers.

The protein localises to the nucleus. Its function is as follows. May act as a transcriptional coactivator of LOB domain-containing proteins. In Arabidopsis thaliana (Mouse-ear cress), this protein is GBF-interacting protein 1-like.